Reading from the N-terminus, the 397-residue chain is S-adenosylmethionine synthase (397 aa).

ATP is bound at residue histidine 16. Aspartate 18 is a Mg(2+) binding site. Glutamate 44 contacts K(+). 2 residues coordinate L-methionine: glutamate 57 and glutamine 100. The interval 100-110 (QSPDIAQGVDN) is flexible loop. Residues 175-177 (DGK), 242-243 (RF), aspartate 251, 257-258 (RK), alanine 274, and lysine 278 contribute to the ATP site. Aspartate 251 contributes to the L-methionine binding site. Residue lysine 282 participates in L-methionine binding.

The protein belongs to the AdoMet synthase family. In terms of assembly, homotetramer; dimer of dimers. Mg(2+) is required as a cofactor. It depends on K(+) as a cofactor.

Its subcellular location is the cytoplasm. It carries out the reaction L-methionine + ATP + H2O = S-adenosyl-L-methionine + phosphate + diphosphate. The protein operates within amino-acid biosynthesis; S-adenosyl-L-methionine biosynthesis; S-adenosyl-L-methionine from L-methionine: step 1/1. Its function is as follows. Catalyzes the formation of S-adenosylmethionine (AdoMet) from methionine and ATP. The overall synthetic reaction is composed of two sequential steps, AdoMet formation and the subsequent tripolyphosphate hydrolysis which occurs prior to release of AdoMet from the enzyme. This chain is S-adenosylmethionine synthase, found in Leifsonia xyli subsp. xyli (strain CTCB07).